The following is a 282-amino-acid chain: Elongation factor Ts (282 aa).

The segment at 80–83 (TDFV) is involved in Mg(2+) ion dislocation from EF-Tu.

It belongs to the EF-Ts family.

It localises to the cytoplasm. Functionally, associates with the EF-Tu.GDP complex and induces the exchange of GDP to GTP. It remains bound to the aminoacyl-tRNA.EF-Tu.GTP complex up to the GTP hydrolysis stage on the ribosome. The sequence is that of Elongation factor Ts (tsf) from Chlamydia muridarum (strain MoPn / Nigg).